We begin with the raw amino-acid sequence, 334 residues long: GTP 3',8-cyclase (334 aa).

The 237-residue stretch at 8–244 folds into the Radical SAM core domain; that stretch reads RYGRPLRDLR…GEVAQRHAFA (237 aa). Arg17 lines the GTP pocket. 2 residues coordinate [4Fe-4S] cluster: Cys24 and Cys28. Residue Tyr30 participates in S-adenosyl-L-methionine binding. Cys31 is a binding site for [4Fe-4S] cluster. Residue Arg70 coordinates GTP. Residue Gly74 coordinates S-adenosyl-L-methionine. GTP is bound at residue Thr101. Ser125 contributes to the S-adenosyl-L-methionine binding site. Lys163 provides a ligand contact to GTP. Met197 is an S-adenosyl-L-methionine binding site. Positions 261 and 264 each coordinate [4Fe-4S] cluster. Residue 266-268 coordinates GTP; that stretch reads RAR. Residue Cys278 coordinates [4Fe-4S] cluster.

It belongs to the radical SAM superfamily. MoaA family. Monomer and homodimer. The cofactor is [4Fe-4S] cluster.

The catalysed reaction is GTP + AH2 + S-adenosyl-L-methionine = (8S)-3',8-cyclo-7,8-dihydroguanosine 5'-triphosphate + 5'-deoxyadenosine + L-methionine + A + H(+). Its pathway is cofactor biosynthesis; molybdopterin biosynthesis. In terms of biological role, catalyzes the cyclization of GTP to (8S)-3',8-cyclo-7,8-dihydroguanosine 5'-triphosphate. The sequence is that of GTP 3',8-cyclase from Xanthomonas axonopodis pv. citri (strain 306).